The sequence spans 1500 residues: DNA-directed RNA polymerase subunit beta' (1500 aa).

Residues Cys60, Cys62, Cys75, and Cys78 each coordinate Zn(2+). The interval 180 to 199 is disordered; it reads DLGGMETAQRSTQRQIEEDY. Asp626, Asp628, and Asp630 together coordinate Mg(2+). Positions 1002, 1075, 1082, and 1085 each coordinate Zn(2+). Residues 1440-1500 are disordered; that stretch reads EVQQAEKSAE…DSDHPDLSSL (61 aa). The segment covering 1449–1468 has biased composition (polar residues); the sequence is EPTTTALPTTNGHQAPQSDT.

It belongs to the RNA polymerase beta' chain family. As to quaternary structure, the RNAP catalytic core consists of 2 alpha, 1 beta, 1 beta' and 1 omega subunit. When a sigma factor is associated with the core the holoenzyme is formed, which can initiate transcription. Mg(2+) serves as cofactor. The cofactor is Zn(2+).

It carries out the reaction RNA(n) + a ribonucleoside 5'-triphosphate = RNA(n+1) + diphosphate. DNA-dependent RNA polymerase catalyzes the transcription of DNA into RNA using the four ribonucleoside triphosphates as substrates. This Chloroflexus aggregans (strain MD-66 / DSM 9485) protein is DNA-directed RNA polymerase subunit beta'.